A 748-amino-acid polypeptide reads, in one-letter code: 5-methyltetrahydropteroyltriglutamate--homocysteine methyltransferase (748 aa).

Lys111 lines the 5-methyltetrahydropteroyltri-L-glutamate pocket. L-homocysteine is bound by residues 428–430 and Glu478; that span reads IGS. L-methionine-binding positions include 428–430 and Glu478; that span reads IGS. 5-methyltetrahydropteroyltri-L-glutamate is bound by residues 509 to 510 and Trp555; that span reads RC. Position 593 (Asp593) interacts with L-homocysteine. Asp593 is an L-methionine binding site. Glu599 is a binding site for 5-methyltetrahydropteroyltri-L-glutamate. The Zn(2+) site is built by His635, Cys637, and Glu659. His687 serves as the catalytic Proton donor. A Zn(2+)-binding site is contributed by Cys719.

Belongs to the vitamin-B12 independent methionine synthase family. Requires Zn(2+) as cofactor.

The enzyme catalyses 5-methyltetrahydropteroyltri-L-glutamate + L-homocysteine = tetrahydropteroyltri-L-glutamate + L-methionine. It participates in amino-acid biosynthesis; L-methionine biosynthesis via de novo pathway; L-methionine from L-homocysteine (MetE route): step 1/1. Its function is as follows. Catalyzes the transfer of a methyl group from 5-methyltetrahydrofolate to homocysteine resulting in methionine formation. The polypeptide is 5-methyltetrahydropteroyltriglutamate--homocysteine methyltransferase (Herpetosiphon aurantiacus (strain ATCC 23779 / DSM 785 / 114-95)).